We begin with the raw amino-acid sequence, 408 residues long: Arginine biosynthesis bifunctional protein ArgJ (408 aa).

Threonine 158, lysine 184, threonine 195, glutamate 281, asparagine 403, and threonine 408 together coordinate substrate. Threonine 195 acts as the Nucleophile in catalysis.

Belongs to the ArgJ family. In terms of assembly, heterotetramer of two alpha and two beta chains.

The protein localises to the cytoplasm. It catalyses the reaction N(2)-acetyl-L-ornithine + L-glutamate = N-acetyl-L-glutamate + L-ornithine. The catalysed reaction is L-glutamate + acetyl-CoA = N-acetyl-L-glutamate + CoA + H(+). Its pathway is amino-acid biosynthesis; L-arginine biosynthesis; L-ornithine and N-acetyl-L-glutamate from L-glutamate and N(2)-acetyl-L-ornithine (cyclic): step 1/1. It participates in amino-acid biosynthesis; L-arginine biosynthesis; N(2)-acetyl-L-ornithine from L-glutamate: step 1/4. In terms of biological role, catalyzes two activities which are involved in the cyclic version of arginine biosynthesis: the synthesis of N-acetylglutamate from glutamate and acetyl-CoA as the acetyl donor, and of ornithine by transacetylation between N(2)-acetylornithine and glutamate. The sequence is that of Arginine biosynthesis bifunctional protein ArgJ from Bacillus cereus (strain ATCC 14579 / DSM 31 / CCUG 7414 / JCM 2152 / NBRC 15305 / NCIMB 9373 / NCTC 2599 / NRRL B-3711).